A 53-amino-acid chain; its full sequence is Mannose/glucose-specific lectin alpha chain (53 aa).

Belongs to the leguminous lectin family. As to quaternary structure, heterodimer of an alpha and a beta chain.

Its function is as follows. This lectin specifically binds mannose and glucose. The polypeptide is Mannose/glucose-specific lectin alpha chain (Vicia cracca (Bird vetch)).